The chain runs to 345 residues: S-adenosylmethionine:tRNA ribosyltransferase-isomerase (345 aa).

This sequence belongs to the QueA family. Monomer.

It is found in the cytoplasm. The enzyme catalyses 7-aminomethyl-7-carbaguanosine(34) in tRNA + S-adenosyl-L-methionine = epoxyqueuosine(34) in tRNA + adenine + L-methionine + 2 H(+). Its pathway is tRNA modification; tRNA-queuosine biosynthesis. Transfers and isomerizes the ribose moiety from AdoMet to the 7-aminomethyl group of 7-deazaguanine (preQ1-tRNA) to give epoxyqueuosine (oQ-tRNA). The protein is S-adenosylmethionine:tRNA ribosyltransferase-isomerase of Shewanella putrefaciens (strain CN-32 / ATCC BAA-453).